The following is a 307-amino-acid chain: Transmembrane and coiled-coil domain-containing protein 5B (307 aa).

A coiled-coil region spans residues 17-207; that stretch reads FASSLEAVKQ…LEKQISKAQD (191 aa). The chain crosses the membrane as a helical span at residues 243–265; the sequence is YFQYLTFMVLVFIRLLAYVIFHL.

The protein belongs to the TMCO5 family.

It is found in the membrane. The protein is Transmembrane and coiled-coil domain-containing protein 5B (TMCO5B) of Homo sapiens (Human).